Here is a 409-residue protein sequence, read N- to C-terminus: Elongation factor Tu, chloroplastic (409 aa).

Residues 10–214 enclose the tr-type G domain; sequence KPHINIGTIG…AVDAYIPTPE (205 aa). Residues 19-26 are G1; that stretch reads GHVDHGKT. 19–26 is a GTP binding site; it reads GHVDHGKT. Mg(2+) is bound at residue Thr26. The tract at residues 60 to 64 is G2; the sequence is GITIN. Residues 81–84 are G3; it reads DCPG. Residues 81 to 85 and 136 to 139 each bind GTP; these read DCPGH and NKQD. The interval 136-139 is G4; the sequence is NKQD. Residues 174 to 176 form a G5 region; it reads SRL.

Belongs to the TRAFAC class translation factor GTPase superfamily. Classic translation factor GTPase family. EF-Tu/EF-1A subfamily.

Its subcellular location is the plastid. The protein resides in the chloroplast. The enzyme catalyses GTP + H2O = GDP + phosphate + H(+). Its function is as follows. GTP hydrolase that promotes the GTP-dependent binding of aminoacyl-tRNA to the A-site of ribosomes during protein biosynthesis. The protein is Elongation factor Tu, chloroplastic (tufA) of Stephanocyclus meneghinianus (Diatom).